The chain runs to 519 residues: 2-isopropylmalate synthase (519 aa).

The Pyruvate carboxyltransferase domain occupies 12-274 (IRIFDTTLRD…DTSIHTSRIV (263 aa)). The Mn(2+) site is built by aspartate 21, histidine 209, histidine 211, and asparagine 245. Residues 396-519 (RLASMTISDV…MQNKQNTALA (124 aa)) form a regulatory domain region.

This sequence belongs to the alpha-IPM synthase/homocitrate synthase family. LeuA type 1 subfamily. In terms of assembly, homodimer. Mn(2+) serves as cofactor.

Its subcellular location is the cytoplasm. It catalyses the reaction 3-methyl-2-oxobutanoate + acetyl-CoA + H2O = (2S)-2-isopropylmalate + CoA + H(+). It participates in amino-acid biosynthesis; L-leucine biosynthesis; L-leucine from 3-methyl-2-oxobutanoate: step 1/4. In terms of biological role, catalyzes the condensation of the acetyl group of acetyl-CoA with 3-methyl-2-oxobutanoate (2-ketoisovalerate) to form 3-carboxy-3-hydroxy-4-methylpentanoate (2-isopropylmalate). This is 2-isopropylmalate synthase from Xylella fastidiosa (strain M23).